The primary structure comprises 107 residues: Nucleoid-associated protein Msil_0275 (107 aa).

It belongs to the YbaB/EbfC family. In terms of assembly, homodimer.

It is found in the cytoplasm. It localises to the nucleoid. Functionally, binds to DNA and alters its conformation. May be involved in regulation of gene expression, nucleoid organization and DNA protection. The polypeptide is Nucleoid-associated protein Msil_0275 (Methylocella silvestris (strain DSM 15510 / CIP 108128 / LMG 27833 / NCIMB 13906 / BL2)).